The chain runs to 156 residues: Cellulose synthase operon protein D (156 aa).

It functions in the pathway glycan metabolism; bacterial cellulose biosynthesis. Functionally, may have a major role in the perfection of crystallization, involved either in the pore structure itself or in the organization of the pores within the linear array of terminal synthesizing complexes (TCs). The protein is Cellulose synthase operon protein D (bcsDI) of Komagataeibacter xylinus (Gluconacetobacter xylinus).